Here is a 325-residue protein sequence, read N- to C-terminus: Protein ORANGE-GREEN, chloroplastic (325 aa).

The N-terminal 54 residues, 1–54 (MDRVLVASYPINHLIRPHSFRIDYCWSTCFTSRLNSGKERQKLSSRWRWRSMAS), are a transit peptide targeting the chloroplast. Residues 53 to 71 (ASDSTDSSSSSSFAPSVES) show a composition bias toward low complexity. The tract at residues 53–77 (ASDSTDSSSSSSFAPSVESDPSDKT) is disordered. Transmembrane regions (helical) follow at residues 164-184 (LYYVTCYSLIAGIILFGGLLA) and 217-237 (IVASFSGGAVGVISALMVVEV). The interval 226–317 (VGVISALMVV…CTGMAMASEH (92 aa)) is CR-type-like. Residues 248-255 (CKYCLGTG) form a CXXCXGXG motif repeat. Residues 259-266 (CARCSNTG) form a CXXCXXXG motif repeat. The CXXCXGXG motif repeat unit spans residues 292–299 (CQNCSGSG). The CXXCXXXG motif repeat unit spans residues 303–310 (CPTCLCTG).

This sequence belongs to the orange-like family.

The protein resides in the plastid. The protein localises to the chloroplast membrane. Involved in chloroplast differentiation in fruit flesh. The chain is Protein ORANGE-GREEN, chloroplastic from Cucumis melo (Muskmelon).